The primary structure comprises 284 residues: 2,3,4,5-tetrahydropyridine-2,6-dicarboxylate N-succinyltransferase (284 aa).

Substrate-binding residues include R111 and D148.

This sequence belongs to the transferase hexapeptide repeat family. In terms of assembly, homotrimer.

Its subcellular location is the cytoplasm. It carries out the reaction (S)-2,3,4,5-tetrahydrodipicolinate + succinyl-CoA + H2O = (S)-2-succinylamino-6-oxoheptanedioate + CoA. Its pathway is amino-acid biosynthesis; L-lysine biosynthesis via DAP pathway; LL-2,6-diaminopimelate from (S)-tetrahydrodipicolinate (succinylase route): step 1/3. The chain is 2,3,4,5-tetrahydropyridine-2,6-dicarboxylate N-succinyltransferase from Ehrlichia ruminantium (strain Gardel).